The primary structure comprises 141 residues: HTH-type transcriptional repressor NsrR (141 aa).

An HTH rrf2-type domain is found at Q2–S129. Residues I28–Q51 constitute a DNA-binding region (H-T-H motif). [2Fe-2S] cluster is bound by residues C91, C96, and C102.

[2Fe-2S] cluster serves as cofactor.

Its function is as follows. Nitric oxide-sensitive repressor of genes involved in protecting the cell against nitrosative stress. May require iron for activity. The polypeptide is HTH-type transcriptional repressor NsrR (Vibrio parahaemolyticus serotype O3:K6 (strain RIMD 2210633)).